A 295-amino-acid chain; its full sequence is Lipoyl synthase (295 aa).

Positions 34, 39, 45, 60, 64, 67, and 273 each coordinate [4Fe-4S] cluster. The 217-residue stretch at 46–262 (WNKRHATIMI…KLMAYAKGFS (217 aa)) folds into the Radical SAM core domain.

This sequence belongs to the radical SAM superfamily. Lipoyl synthase family. [4Fe-4S] cluster is required as a cofactor.

The protein localises to the cytoplasm. The catalysed reaction is [[Fe-S] cluster scaffold protein carrying a second [4Fe-4S](2+) cluster] + N(6)-octanoyl-L-lysyl-[protein] + 2 oxidized [2Fe-2S]-[ferredoxin] + 2 S-adenosyl-L-methionine + 4 H(+) = [[Fe-S] cluster scaffold protein] + N(6)-[(R)-dihydrolipoyl]-L-lysyl-[protein] + 4 Fe(3+) + 2 hydrogen sulfide + 2 5'-deoxyadenosine + 2 L-methionine + 2 reduced [2Fe-2S]-[ferredoxin]. Its pathway is protein modification; protein lipoylation via endogenous pathway; protein N(6)-(lipoyl)lysine from octanoyl-[acyl-carrier-protein]: step 2/2. Functionally, catalyzes the radical-mediated insertion of two sulfur atoms into the C-6 and C-8 positions of the octanoyl moiety bound to the lipoyl domains of lipoate-dependent enzymes, thereby converting the octanoylated domains into lipoylated derivatives. This is Lipoyl synthase from Anaplasma marginale (strain St. Maries).